Reading from the N-terminus, the 258-residue chain is Triosephosphate isomerase (258 aa).

Asn-9–Lys-11 serves as a coordination point for substrate. His-105 functions as the Electrophile in the catalytic mechanism. Glu-176 serves as the catalytic Proton acceptor. Substrate contacts are provided by Gly-182 and Ser-214.

Belongs to the triosephosphate isomerase family. As to quaternary structure, homodimer.

Its subcellular location is the cytoplasm. It catalyses the reaction D-glyceraldehyde 3-phosphate = dihydroxyacetone phosphate. It functions in the pathway carbohydrate biosynthesis; gluconeogenesis. It participates in carbohydrate degradation; glycolysis; D-glyceraldehyde 3-phosphate from glycerone phosphate: step 1/1. In terms of biological role, involved in the gluconeogenesis. Catalyzes stereospecifically the conversion of dihydroxyacetone phosphate (DHAP) to D-glyceraldehyde-3-phosphate (G3P). This is Triosephosphate isomerase from Mycoplasmopsis agalactiae (strain NCTC 10123 / CIP 59.7 / PG2) (Mycoplasma agalactiae).